The primary structure comprises 184 residues: Tumor necrosis factor alpha-induced protein 8-like protein 2 (184 aa).

A Phosphoserine modification is found at Ser3.

This sequence belongs to the TNFAIP8 family. TNFAIP8L2 subfamily. In terms of assembly, may interact with CASP8; however, such result is unclear since could not reproduce the interaction with CASP8. Interacts with RAC1. Phosphorylated by TAK1/MAP3K7; this phosphorylation triggers association with BTRC and subsequent ubiquitination and degradation. Post-translationally, ubiquitinated in a BTRC-depdent manner; leading to degradation mediated through the proteasome pathway.

It is found in the cytoplasm. It localises to the nucleus. The protein localises to the lysosome. Its function is as follows. Acts as a negative regulator of innate and adaptive immunity by maintaining immune homeostasis. Plays a regulatory role in the Toll-like signaling pathway by determining the strength of LPS-induced signaling and gene expression. Inhibits TCR-mediated T-cell activation and negatively regulate T-cell function to prevent hyperresponsiveness. Also inhibits autolysosome formation via negatively modulating MTOR activation by interacting with RAC1 and promoting the disassociation of the RAC1-MTOR complex. Plays an essential role in NK-cell biology by acting as a checkpoint and displaying an expression pattern correlating with NK-cell maturation process and by negatively regulating NK-cell maturation and antitumor immunity. Mechanistically, suppresses IL-15-triggered mTOR activity in NK-cells. The polypeptide is Tumor necrosis factor alpha-induced protein 8-like protein 2 (TNFAIP8L2) (Callithrix jacchus (White-tufted-ear marmoset)).